The chain runs to 422 residues: Imidazolonepropionase (422 aa).

Residues histidine 82 and histidine 84 each contribute to the Fe(3+) site. Zn(2+) is bound by residues histidine 82 and histidine 84. The 4-imidazolone-5-propanoate site is built by arginine 91, tyrosine 154, and histidine 187. Tyrosine 154 contributes to the N-formimidoyl-L-glutamate binding site. Residue histidine 252 participates in Fe(3+) binding. Histidine 252 serves as a coordination point for Zn(2+). Position 255 (glutamate 255) interacts with 4-imidazolone-5-propanoate. Aspartate 327 is a binding site for Fe(3+). Zn(2+) is bound at residue aspartate 327. N-formimidoyl-L-glutamate contacts are provided by asparagine 329 and glycine 331. Serine 332 contacts 4-imidazolone-5-propanoate.

It belongs to the metallo-dependent hydrolases superfamily. HutI family. Zn(2+) serves as cofactor. Requires Fe(3+) as cofactor.

The protein localises to the cytoplasm. The enzyme catalyses 4-imidazolone-5-propanoate + H2O = N-formimidoyl-L-glutamate. Its pathway is amino-acid degradation; L-histidine degradation into L-glutamate; N-formimidoyl-L-glutamate from L-histidine: step 3/3. Functionally, catalyzes the hydrolytic cleavage of the carbon-nitrogen bond in imidazolone-5-propanoate to yield N-formimidoyl-L-glutamate. It is the third step in the universal histidine degradation pathway. The sequence is that of Imidazolonepropionase from Alkaliphilus metalliredigens (strain QYMF).